The following is an 82-amino-acid chain: MNRKLLLVTLMVTMLVMQPAEAGVWDWIKKTAGKIWNSEPVKALKSQALNAAKNFVAEKIGATPSEAGQMPFDEFMDILYES.

The signal sequence occupies residues 1 to 22 (MNRKLLLVTLMVTMLVMQPAEA). Positions 66 to 82 (EAGQMPFDEFMDILYES) are excised as a propeptide.

The protein belongs to the non-disulfide-bridged peptide (NDBP) superfamily. Long chain multifunctional peptide (group 2) family. In terms of tissue distribution, expressed by the venom gland.

Its subcellular location is the secreted. The protein localises to the target cell membrane. Antimicrobial peptide with moderate activity against Gram-positive bacteria and Gram-negative bacteria, as well as low activity against fungi. Acts by inducing bacterial membrane disruption. Shows activity against B.subtilis (MIC=4 ug/ml), S.epidermidis (MIC=64 ug/ml), S.aureus (MIC=32 ug/ml), E.coli (MIC=128 ug/ml), K.pneumoniae (MIC=64 ug/ml), P.aeruginosa (MIC=64 ug/ml), and C.albicans (MIC=128 ug/ml). Does not show hemolysis activity. The chain is Antimicrobial peptide Smp43 from Scorpio palmatus (Israeli golden scorpion).